Reading from the N-terminus, the 121-residue chain is Protein CHLORORESPIRATORY REDUCTION 42, chloroplastic (121 aa).

In terms of assembly, biogenesis factor component of the plastidial NDH subcomplex A.

The protein localises to the plastid. It is found in the chloroplast. Its subcellular location is the chloroplast stroma. In terms of biological role, required for both formation and activity of the chloroplast NAD(P)H dehydrogenase (NDH) complex of the photosynthetic electron transport chain. Functions in assembly or stabilization of the NDH complex; probably involved, together with CRR1 and CRR6, in the incorporation of NdhJ, NdhM, NdhK and NdhI into the NDH subcomplex A assembly intermediate (NAI500) to produce the complex NAI400. This chain is Protein CHLORORESPIRATORY REDUCTION 42, chloroplastic, found in Arabidopsis thaliana (Mouse-ear cress).